A 546-amino-acid polypeptide reads, in one-letter code: Light-independent protochlorophyllide reductase subunit B (546 aa).

A [4Fe-4S] cluster-binding site is contributed by D36. D287 acts as the Proton donor in catalysis. A substrate-binding site is contributed by 422-423 (GL). The tract at residues 443–501 (PSHLSAHRPTGEAVGDAVGEPPAAPRDQAAPAATLDGSAAQSDPARTTPPGAPSWEDSA) is disordered.

Belongs to the ChlB/BchB/BchZ family. As to quaternary structure, protochlorophyllide reductase is composed of three subunits; BchL, BchN and BchB. Forms a heterotetramer of two BchB and two BchN subunits. Requires [4Fe-4S] cluster as cofactor.

The enzyme catalyses chlorophyllide a + oxidized 2[4Fe-4S]-[ferredoxin] + 2 ADP + 2 phosphate = protochlorophyllide a + reduced 2[4Fe-4S]-[ferredoxin] + 2 ATP + 2 H2O. It participates in porphyrin-containing compound metabolism; bacteriochlorophyll biosynthesis (light-independent). In terms of biological role, component of the dark-operative protochlorophyllide reductase (DPOR) that uses Mg-ATP and reduced ferredoxin to reduce ring D of protochlorophyllide (Pchlide) to form chlorophyllide a (Chlide). This reaction is light-independent. The NB-protein (BchN-BchB) is the catalytic component of the complex. This chain is Light-independent protochlorophyllide reductase subunit B, found in Rhodospirillum rubrum (strain ATCC 11170 / ATH 1.1.1 / DSM 467 / LMG 4362 / NCIMB 8255 / S1).